We begin with the raw amino-acid sequence, 434 residues long: Adenylosuccinate synthetase (434 aa).

GTP contacts are provided by residues 13-19 (GDEGKGK) and 41-43 (GHT). Aspartate 14 (proton acceptor) is an active-site residue. Mg(2+) is bound by residues aspartate 14 and glycine 41. IMP-binding positions include 14–17 (DEGK), 39–42 (NAGH), threonine 133, arginine 147, glutamine 228, threonine 243, and arginine 307. Histidine 42 functions as the Proton donor in the catalytic mechanism. A substrate-binding site is contributed by 303-309 (STTGRKR). GTP is bound by residues arginine 309, 335–337 (KID), and 417–419 (STG).

Belongs to the adenylosuccinate synthetase family. Homodimer. Mg(2+) is required as a cofactor.

Its subcellular location is the cytoplasm. The catalysed reaction is IMP + L-aspartate + GTP = N(6)-(1,2-dicarboxyethyl)-AMP + GDP + phosphate + 2 H(+). It functions in the pathway purine metabolism; AMP biosynthesis via de novo pathway; AMP from IMP: step 1/2. In terms of biological role, plays an important role in the de novo pathway of purine nucleotide biosynthesis. Catalyzes the first committed step in the biosynthesis of AMP from IMP. This chain is Adenylosuccinate synthetase, found in Wigglesworthia glossinidia brevipalpis.